Here is a 638-residue protein sequence, read N- to C-terminus: Epithelial sodium channel subunit beta (638 aa).

The Cytoplasmic segment spans residues 1-50 (MPVKKYLLKCLHRLQKGPGYTYKELLVWYCNNTNTHGPKRIICEGPKKKA). A helical membrane pass occupies residues 51-71 (MWFLLTLLFACLVCWQWGVFI). Residues 72 to 530 (QTYLSWEVSV…GGQFGFWMGG (459 aa)) lie on the Extracellular side of the membrane. 9 cysteine pairs are disulfide-bonded: Cys-98-Cys-270, Cys-182-Cys-187, Cys-194-Cys-201, Cys-247-Cys-254, Cys-359-Cys-446, Cys-384-Cys-442, Cys-388-Cys-438, Cys-397-Cys-424, and Cys-399-Cys-413. 2 N-linked (GlcNAc...) asparagine glycosylation sites follow: Asn-135 and Asn-141. A helical transmembrane segment spans residues 531 to 551 (SVLCLIEFGEIIIDFIWITVI). Topologically, residues 552 to 638 (KLVASCKGLR…MESDSEVEAI (87 aa)) are cytoplasmic. A disordered region spans residues 598 to 620 (NAEVYPDQQTLPIPGTPPPNYDS). Positions 614–618 (PPPNY) match the PY motif; recruits WW domain-containing proteins and is thereby required for ubiquitination and inhibition of the channel by NEDD4 and NEDD4L motif. Phosphoserine occurs at positions 631 and 633.

Belongs to the amiloride-sensitive sodium channel (TC 1.A.6) family. SCNN1B subfamily. Component of the heterotrimeric epithelial sodium channel (ENaC) composed of an alpha/SCNN1A, a beta/SCNN1B and a gamma/SCNN1G subunit. Interacts with WWP1 (via WW domains). Interacts with WWP2 (via WW domains). Interacts with the full-length immature form of PCSK9 (pro-PCSK9). Interacts (N-glycosylated) with BPIFA1; the interaction is direct and inhibits the proteolytic processing of SCNN1A and SCNN1G and the activation of ENaC. Post-translationally, ubiquitinated. Can be ubiquitinated at multiple sites and undergo monoubiquitination and polyubiquitination. Ubiquitination by NEDD4 or NEDD4L inhibits the ENaC channel through endocytosis, intracellular retention and degradation of its individual subunits. However, some studies could not confirm the ubiquitination of this subunit of the ENaC. In terms of processing, N-glycosylated. N-glycosylation is required for interaction with BPIFA1. Phosphorylated on serine and threonine residues. Aldosterone and insulin increase the basal level of phosphorylation. Expressed in lung and epididymis. In the caput region of the epididymis, expressed at the luminal and basolateral surfaces of the ducts and in the smooth muscle coat. In the caudal region of the epididymis, expressed along the luminal border but not continuously, in the smooth muscle coat, in the interstitial muscle tissue and in sperm in the caudal lumen.

Its subcellular location is the apical cell membrane. The protein resides in the cytoplasmic vesicle membrane. The catalysed reaction is Na(+)(in) = Na(+)(out). Its activity is regulated as follows. Originally identified and characterized by its inhibition by the diuretic drug amiloride. This is one of the three pore-forming subunits of the heterotrimeric epithelial sodium channel (ENaC), a critical regulator of sodium balance and fluid homeostasis. ENaC operates in epithelial tissues, where it mediates the electrodiffusion of sodium ions from extracellular fluid through the apical membrane of cells, with water following osmotically. It plays a key role in maintaining sodium homeostasis through electrogenic sodium reabsorption in the kidneys. This subunit is not essential for ENaC function in airway surface liquid homeostasis and proper mucus clearance. The chain is Epithelial sodium channel subunit beta from Rattus norvegicus (Rat).